The chain runs to 562 residues: Vacuolar basic amino acid transporter 1 (562 aa).

Residues 1–30 are Vacuolar-facing; it reads MQTLDETSNLLPPPEEAEAPPLEQKFHEYN. Residues 31–51 form a helical membrane-spanning segment; it reads LALPKFPILFSLWLGSFLSSL. The Cytoplasmic segment spans residues 52-100; sequence DSTIVANIMNRVAEEFSESSKKQWIATSFLLTNTAFQPLYGKLSDITGR. Residues 101–121 form a helical membrane-spanning segment; it reads KSALLTAQFFFGLGCLLTCFA. Residues 122-131 lie on the Vacuolar side of the membrane; it reads RNVTEFSIAR. An N-linked (GlcNAc...) asparagine glycan is attached at Asn-123. The chain crosses the membrane as a helical span at residues 132-152; that stretch reads AICGIGAGGLNAISSIAVSDI. Residues 153–166 lie on the Cytoplasmic side of the membrane; that stretch reads CTARERGVYQGYAN. The chain crosses the membrane as a helical span at residues 167-187; it reads IVFGFGQLLGAPLGGVFIETI. The Vacuolar segment spans residues 188 to 190; it reads GWR. Residues 191 to 211 form a helical membrane-spanning segment; it reads ALFGIQVPVIMLCSVLAIKNI. Topologically, residues 212–232 are cytoplasmic; the sequence is NIKLFHVPPMKERYTLKNLSR. A helical membrane pass occupies residues 233–253; that stretch reads IDIFGSLSLVATISGVLFLCS. Residues 254–255 are Vacuolar-facing; the sequence is SQ. A helical membrane pass occupies residues 256 to 276; the sequence is LNKLYLALFTIGSFIVFILVE. Residues 277-292 are Cytoplasmic-facing; it reads RYYATEKILPFELLTR. A helical membrane pass occupies residues 293–313; that stretch reads SFCLSSAVTVISSFVVFGEIF. Residues 314–331 are Vacuolar-facing; the sequence is RSPIYLQLLQNISVTKTG. Asn-324 carries N-linked (GlcNAc...) asparagine glycosylation. A helical transmembrane segment spans residues 332-352; the sequence is LFLIFPSISVAVGSLVTGWVL. The Cytoplasmic segment spans residues 353 to 365; it reads RNTKINLAHCAYQ. The helical transmembrane segment at 366 to 386 threads the bilayer; that stretch reads IIFGGMIMQLLGLGLGYFLLS. Over 387 to 419 the chain is Vacuolar; that stretch reads HLNPDYTIYDMLESITFRSNSIWWKLIYVFASV. Residues 420–440 traverse the membrane as a helical segment; it reads LVSFGYACLLVATLVSIVFTV. The Cytoplasmic portion of the chain corresponds to 441 to 448; the sequence is EKSQQGTM. The helical transmembrane segment at 449–469 threads the bilayer; the sequence is TGVFYLWRSIGNVLGASLTLV. The Vacuolar segment spans residues 470-528; the sequence is SYENSLSSMLWNYMFKTKRDDEYHFTKKQYYSLINDSSYLRGPNFPTDIFVRILDVYKK. Asn-504 is a glycosylation site (N-linked (GlcNAc...) asparagine). Residues 529–549 traverse the membrane as a helical segment; that stretch reads AFLISYIPNIALAAVGIVLSL. Residues 550–562 are Cytoplasmic-facing; that stretch reads YLVKHTYKRSSSS.

It belongs to the major facilitator superfamily.

It is found in the vacuole membrane. Functionally, transporter required for vacuolar uptake of at least histidine and lysine. This chain is Vacuolar basic amino acid transporter 1 (VBA1), found in Saccharomyces cerevisiae (strain ATCC 204508 / S288c) (Baker's yeast).